A 427-amino-acid chain; its full sequence is Serine--tRNA ligase (427 aa).

231 to 233 contacts L-serine; the sequence is TAE. 262–264 is an ATP binding site; that stretch reads RSE. An L-serine-binding site is contributed by E285. 349–352 serves as a coordination point for ATP; it reads EISS. L-serine is bound at residue S385.

Belongs to the class-II aminoacyl-tRNA synthetase family. Type-1 seryl-tRNA synthetase subfamily. Homodimer. The tRNA molecule binds across the dimer.

Its subcellular location is the cytoplasm. The enzyme catalyses tRNA(Ser) + L-serine + ATP = L-seryl-tRNA(Ser) + AMP + diphosphate + H(+). It catalyses the reaction tRNA(Sec) + L-serine + ATP = L-seryl-tRNA(Sec) + AMP + diphosphate + H(+). It functions in the pathway aminoacyl-tRNA biosynthesis; selenocysteinyl-tRNA(Sec) biosynthesis; L-seryl-tRNA(Sec) from L-serine and tRNA(Sec): step 1/1. Its function is as follows. Catalyzes the attachment of serine to tRNA(Ser). Is also able to aminoacylate tRNA(Sec) with serine, to form the misacylated tRNA L-seryl-tRNA(Sec), which will be further converted into selenocysteinyl-tRNA(Sec). The polypeptide is Serine--tRNA ligase (Listeria monocytogenes serotype 4b (strain CLIP80459)).